We begin with the raw amino-acid sequence, 254 residues long: 4-hydroxy-tetrahydrodipicolinate reductase (254 aa).

8–13 (GAFGRM) is an NAD(+) binding site. Residue K36 coordinates NADP(+). NAD(+) is bound by residues 89-91 (GTT) and 115-118 (STNY). Catalysis depends on H147, which acts as the Proton donor/acceptor. Position 148 (H148) interacts with (S)-2,3,4,5-tetrahydrodipicolinate. K151 (proton donor) is an active-site residue. 157–158 (GT) is a (S)-2,3,4,5-tetrahydrodipicolinate binding site.

This sequence belongs to the DapB family.

The protein resides in the cytoplasm. It carries out the reaction (S)-2,3,4,5-tetrahydrodipicolinate + NAD(+) + H2O = (2S,4S)-4-hydroxy-2,3,4,5-tetrahydrodipicolinate + NADH + H(+). The catalysed reaction is (S)-2,3,4,5-tetrahydrodipicolinate + NADP(+) + H2O = (2S,4S)-4-hydroxy-2,3,4,5-tetrahydrodipicolinate + NADPH + H(+). It functions in the pathway amino-acid biosynthesis; L-lysine biosynthesis via DAP pathway; (S)-tetrahydrodipicolinate from L-aspartate: step 4/4. Functionally, catalyzes the conversion of 4-hydroxy-tetrahydrodipicolinate (HTPA) to tetrahydrodipicolinate. The chain is 4-hydroxy-tetrahydrodipicolinate reductase from Methanospirillum hungatei JF-1 (strain ATCC 27890 / DSM 864 / NBRC 100397 / JF-1).